A 283-amino-acid chain; its full sequence is MTVKEYAGELGISKRLLTDIKFGGGDLQINGEHVTVKYVLKEGDLLIVKFPEEQVSETLLAEPVPLDILYEDEHVLVINKQPYVSSIPSREHPSGSIANGIIDHYQTTGVRATVHLVTRLDRDTSGIMLVAKHRFAHSILSSAQKNGLVKRRYAAVVHGRMAQMEGTVDAPIGRHPDSIIERTVTPDGQKAVTHFYVTCANDDMTSVALQLETGRTHQIRVHMSYLGHPLCGDTLYGGTRQEIGRQALHSEHLSFIHPLTQENMRFHAPLPQDMSKLIKGENH.

Residue aspartate 121 is part of the active site.

This sequence belongs to the pseudouridine synthase RluA family.

It catalyses the reaction a uridine in RNA = a pseudouridine in RNA. This is an uncharacterized protein from Bacillus subtilis (strain 168).